Reading from the N-terminus, the 183-residue chain is Large ribosomal subunit protein uL22 (183 aa).

Belongs to the universal ribosomal protein uL22 family.

The sequence is that of Large ribosomal subunit protein uL22 (RPL17) from Podocoryna carnea (Hydrozoan).